The chain runs to 481 residues: Putative amino-acid transporter CPE0389 (481 aa).

13 helical membrane passes run 7–27, 36–56, 87–107, 127–147, 156–176, 208–228, 241–261, 289–309, 338–358, 364–384, 401–421, 422–442, and 461–481; these read LGVIALAGVVISAMLGGGVYN, ASAGAILISWIITGIGIWFIA, FLMAWGYWICNSFANVGYAVL, LSIACGSLVLWIIFFIVLAGV, IGTIGKLLPLAIFLLVLLFSF, STMLVTLWVFTGIEGAVVVSG, FLGFITCLLIYTLLSLLPLGV, VIMNLGVIIAILSSWLIWTVM, FSLLASTIIMQIILILVHFAG, MLSITSVMALPCYLVSTLYLF, RKYAMITAILGSIYGVWLIYA, AGINYMLIAIVIYALGIPVFI, and YFAIVLIILALIGLVYLFKFM.

The protein belongs to the amino acid-polyamine-organocation (APC) superfamily. Basic amino acid/polyamine antiporter (APA) (TC 2.A.3.2) family.

It is found in the cell membrane. Could be an amino acid transporter. The protein is Putative amino-acid transporter CPE0389 of Clostridium perfringens (strain 13 / Type A).